The following is a 110-amino-acid chain: Eukaryotic translation initiation factor eIF1 (110 aa).

Belongs to the SUI1 family.

Probably involved in translation. The sequence is that of Eukaryotic translation initiation factor eIF1 from Anopheles gambiae (African malaria mosquito).